Here is a 311-residue protein sequence, read N- to C-terminus: MSSLRTDDDTWDIATSVGSTAVMVAAARAGETERDDALIRDPYAKILVAGAGTGVWETVLDSEFAAKIENLDPEAAAIFAHMGNYQAVRTHFFDAYYREAADAGIRQIVILASGLDSRAYRLDWPAGTTVYEIDQPKVLEYKSATLREHGIEPVAQRREVPVDLRFDWPTALHDAGFDASLPTAWLAEGLLMYLPAEAQDRLFELVTELSAPGSRIAVETAGVAATDRREAMRERFKKFADQLNLSSALDIQELVYDDPDRADVAEWLDAHGWRARGVHALDEMRRLDRLVELPDDPDRAAFSTFVTAQRL.

S-adenosyl-L-methionine-binding positions include Asp134 and 163 to 164; that span reads DL.

Belongs to the UPF0677 family.

Exhibits S-adenosyl-L-methionine-dependent methyltransferase activity. In Mycolicibacterium smegmatis (strain ATCC 700084 / mc(2)155) (Mycobacterium smegmatis), this protein is Putative S-adenosyl-L-methionine-dependent methyltransferase MSMEG_0095/MSMEI_0092.